Consider the following 877-residue polypeptide: MGNFNFLPLVSFASFVVVLVLVCAQDQSGFVSIDCGIPEDSSYYDEKTDIKYISDAAFVESGTIHSIDSKFQKKNLEKQFQKVRSFPEGKKNCYDVQPPQGKGFKYLIRTRFMYGNYDNLGKAPDFDLYLGVNLWDSVTLENSTTIVTKEIIYTLRSDKVHVCLVDKERGTPFLSVLELRLLKNNIYETASDSLMLYRRWDLGATGDLPARYKDDIFDRFWMPLMFPNFLILNTSLMIDPTSSNGFLPPSVVMSTAVAPMNSSIEQIMVYWEPRDPNWKFYIYIHFAEVEKLPSNETREFSVFLNKEQIDTTSVFRPSYLYTDTLYVQNPVSGPFLEFVLRQGVKSTRPPIMNAIETYRTNEFLDLPTDQNDVDAIMKIKTKYKVKKNWLGDPCAPFGYPWQGINCSYTANNPPRIISVNLSFSGLTGQIDPVFITLTPLQKLDLSNNRLTGTVPDFLANLPDLTELNLEENKLTGILPEKLLERSKDGSLSLRVGGNPDLCVSDSCRNKKTERKEYIIPSVASVTGLFFLLLALISFWQFKKRQQSVKTGPLDTKRYYKYSEIVEITNNFERVLGQGGFGKVYYGVLRGEQVAIKMLSKSSAQGYKEFRAEVELLLRVHHKNLIALIGYCHEGDQMALIYEYIGNGTLGDYLSGKNSSILSWEERLQISLDAAQGLEYLHNGCKPPIVHRDVKPTNILINEKLQAKIADFGLSRSFTLEGDSQVSTEVAGTIGYLDPEHYSMQQFSEKSDVYSFGVVLLEVITGQPVISRSRTEENRHISDRVSLMLSKGDIKSIVDPKLGERFNAGLAWKITEVALACASESTKTRLTMSQVVAELKESLCRARTSGDSGDISFSEPTEMNVSMTVDPGVLPQPR.

Residues 1–24 (MGNFNFLPLVSFASFVVVLVLVCA) form the signal peptide. The Extracellular portion of the chain corresponds to 25 to 517 (QDQSGFVSID…RNKKTERKEY (493 aa)). Residues N142, N233, N261, N295, N405, and N420 are each glycosylated (N-linked (GlcNAc...) asparagine). LRR repeat units lie at residues 439-462 (PLQK…ANLP) and 463-484 (DLTE…KLLE). A helical transmembrane segment spans residues 518-538 (IIPSVASVTGLFFLLLALISF). The Cytoplasmic segment spans residues 539–877 (WQFKKRQQSV…VDPGVLPQPR (339 aa)). The Protein kinase domain occupies 569–842 (NNFERVLGQG…QVVAELKESL (274 aa)). ATP-binding positions include 575–583 (LGQGGFGKV) and K596. Phosphotyrosine is present on Y641. The active-site Proton acceptor is D692. Position 726 is a phosphoserine (S726). Residues T727 and T732 each carry the phosphothreonine modification.

Belongs to the protein kinase superfamily. Ser/Thr protein kinase family.

It is found in the cell membrane. It catalyses the reaction L-seryl-[protein] + ATP = O-phospho-L-seryl-[protein] + ADP + H(+). It carries out the reaction L-threonyl-[protein] + ATP = O-phospho-L-threonyl-[protein] + ADP + H(+). In Arabidopsis thaliana (Mouse-ear cress), this protein is Putative leucine-rich repeat receptor-like serine/threonine-protein kinase At2g19230.